A 1025-amino-acid chain; its full sequence is Multidrug resistance protein MdtC (1025 aa).

Transmembrane regions (helical) follow at residues 15–35 (ILISLAITLCGILGFRLLPVA), 333–353 (EVEQTLVISVALVILVVFLFL), 360–380 (LIPAVAVPVSLIGTFAAMYLC), 387–407 (LSLMALTIATGFVVDDAIVVL), 431–451 (VGFTVLSMSLSLVAVFLPLLL), 469–489 (VAIGISLAVSLTLTPMMCGWL), 528–548 (LTGLVVLGTIALSVWLYISIP), 851–871 (AQVILILAAIATVYIVLGMLY), 875–895 (VHPLTILSTLPSAGVGALLAL), 897–917 (IFDAPFSLIALIGIMLLIGIV), 953–973 (PIMMTTLAALFGALPLVLSGG), and 984–1004 (ITIVGGLVMSQLLTLYTTPVV).

Belongs to the resistance-nodulation-cell division (RND) (TC 2.A.6) family. MdtC subfamily. In terms of assembly, part of a tripartite efflux system composed of MdtA, MdtB and MdtC. MdtC forms a heteromultimer with MdtB.

It localises to the cell inner membrane. The sequence is that of Multidrug resistance protein MdtC from Klebsiella pneumoniae (strain 342).